The primary structure comprises 428 residues: Glutamate-1-semialdehyde 2,1-aminomutase (428 aa).

At K265 the chain carries N6-(pyridoxal phosphate)lysine.

Belongs to the class-III pyridoxal-phosphate-dependent aminotransferase family. HemL subfamily. In terms of assembly, homodimer. Pyridoxal 5'-phosphate serves as cofactor.

It localises to the cytoplasm. It catalyses the reaction (S)-4-amino-5-oxopentanoate = 5-aminolevulinate. It participates in porphyrin-containing compound metabolism; protoporphyrin-IX biosynthesis; 5-aminolevulinate from L-glutamyl-tRNA(Glu): step 2/2. This chain is Glutamate-1-semialdehyde 2,1-aminomutase, found in Ruthia magnifica subsp. Calyptogena magnifica.